Consider the following 300-residue polypeptide: GTPase Era (300 aa).

Residues 8–176 (RCGYVAIVGR…ERLVAGRLPQ (169 aa)) enclose the Era-type G domain. The interval 16 to 23 (GRPNVGKS) is G1. Residue 16 to 23 (GRPNVGKS) coordinates GTP. The G2 stretch occupies residues 42 to 46 (QTTRH). Residues 63-66 (DTPG) form a G3 region. GTP contacts are provided by residues 63–67 (DTPGL) and 125–128 (NKAD). Residues 125 to 128 (NKAD) are G4. Positions 155-157 (ISA) are G5. The 85-residue stretch at 199-283 (VREKIMRQLG…MLNLWVKVKG (85 aa)) folds into the KH type-2 domain.

The protein belongs to the TRAFAC class TrmE-Era-EngA-EngB-Septin-like GTPase superfamily. Era GTPase family. In terms of assembly, monomer.

The protein resides in the cytoplasm. It localises to the cell inner membrane. An essential GTPase that binds both GDP and GTP, with rapid nucleotide exchange. Plays a role in 16S rRNA processing and 30S ribosomal subunit biogenesis and possibly also in cell cycle regulation and energy metabolism. The polypeptide is GTPase Era (Azotobacter vinelandii (strain DJ / ATCC BAA-1303)).